Consider the following 233-residue polypeptide: LexA repressor (233 aa).

Positions 26–46 (FDEMKDALDLRSKSGIHRLIT) form a DNA-binding region, H-T-H motif. Catalysis depends on for autocatalytic cleavage activity residues Ser154 and Lys192.

It belongs to the peptidase S24 family. As to quaternary structure, homodimer.

The enzyme catalyses Hydrolysis of Ala-|-Gly bond in repressor LexA.. In terms of biological role, represses a number of genes involved in the response to DNA damage (SOS response), including recA and lexA. In the presence of single-stranded DNA, RecA interacts with LexA causing an autocatalytic cleavage which disrupts the DNA-binding part of LexA, leading to derepression of the SOS regulon and eventually DNA repair. This chain is LexA repressor, found in Nitrobacter hamburgensis (strain DSM 10229 / NCIMB 13809 / X14).